A 430-amino-acid polypeptide reads, in one-letter code: Purine nucleoside phosphorylase LACC1 (430 aa).

Position 247 is an N6-acetyllysine (Lys247). Residues His250, Cys284, and His301 each contribute to the Zn(2+) site.

This sequence belongs to the purine nucleoside phosphorylase YfiH/LACC1 family. As to quaternary structure, interacts with FASN. Interacts with SDHA. Interacts with ATF6, EIF2AK3 and ERN1. Phosphorylated on tyrosine residues. In terms of tissue distribution, predominantly expressed in myeloid cells. Highly expressed in primary macrophages and dendritic cells sorted from the peritoneum or spleen, respectively (at protein level).

The protein resides in the cytoplasm. It is found in the nucleus. It localises to the endoplasmic reticulum. The protein localises to the peroxisome. The enzyme catalyses adenosine + phosphate = alpha-D-ribose 1-phosphate + adenine. The catalysed reaction is inosine + phosphate = alpha-D-ribose 1-phosphate + hypoxanthine. It carries out the reaction guanosine + phosphate = alpha-D-ribose 1-phosphate + guanine. It catalyses the reaction S-methyl-5'-thioadenosine + phosphate = 5-(methylsulfanyl)-alpha-D-ribose 1-phosphate + adenine. The enzyme catalyses adenosine + H2O + H(+) = inosine + NH4(+). In terms of biological role, purine nucleoside enzyme that catalyzes the phosphorolysis of adenosine, guanosine and inosine nucleosides, yielding D-ribose 1-phosphate and the respective free bases, adenine, guanine and hypoxanthine. Also catalyzes the phosphorolysis of S-methyl-5'-thioadenosine into adenine and S-methyl-5-thio-alpha-D-ribose 1-phosphate. Also has adenosine deaminase activity. Acts as a regulator of innate immunity in macrophages by modulating the purine nucleotide metabolism, thereby regulating the metabolic function and bioenergetic state of macrophages. Enables a purine nucleotide cycle between adenosine and inosine monophosphate and adenylosuccinate that prevents cytoplasmic acidification and balances the cytoplasmic-mitochondrial redox interface. The purine nucleotide cycle consumes aspartate and releases fumarate in a manner involving fatty acid oxidation and ATP-citrate lyase activity. Participates in pattern recognition receptor-induced cytokines in macrophages: associates with the NOD2-signaling complex and promotes optimal NOD2-induced signaling, cytokine secretion and bacterial clearance. Localizes to the endoplasmic reticulum upon PRR stimulation of macrophages and associates with endoplasmic reticulum-stress sensors, promoting the endoplasmic reticulum unfolded protein response (UPR). Does not show laccase activity. This is Purine nucleoside phosphorylase LACC1 from Mus musculus (Mouse).